The following is a 347-amino-acid chain: Aspartate carbamoyltransferase catalytic subunit (347 aa).

Residues arginine 75 and threonine 76 each coordinate carbamoyl phosphate. Lysine 103 contributes to the L-aspartate binding site. 3 residues coordinate carbamoyl phosphate: arginine 125, histidine 153, and glutamine 156. Positions 193 and 247 each coordinate L-aspartate. Glycine 288 and proline 289 together coordinate carbamoyl phosphate.

Belongs to the aspartate/ornithine carbamoyltransferase superfamily. ATCase family. Heterododecamer (2C3:3R2) of six catalytic PyrB chains organized as two trimers (C3), and six regulatory PyrI chains organized as three dimers (R2).

The catalysed reaction is carbamoyl phosphate + L-aspartate = N-carbamoyl-L-aspartate + phosphate + H(+). It functions in the pathway pyrimidine metabolism; UMP biosynthesis via de novo pathway; (S)-dihydroorotate from bicarbonate: step 2/3. Functionally, catalyzes the condensation of carbamoyl phosphate and aspartate to form carbamoyl aspartate and inorganic phosphate, the committed step in the de novo pyrimidine nucleotide biosynthesis pathway. The polypeptide is Aspartate carbamoyltransferase catalytic subunit (Erythrobacter litoralis (strain HTCC2594)).